The sequence spans 206 residues: MKLLLASNNAKKLKELQRILDQAGLDSVELLALRDVEAYDEPIEDGRTFADNAQIKARAGVTHTGIATIADDSGIAVEELNGMPGVLSARWSGAHGNDTANNELLLAQMEHVPDERRNAAFVSVCVLALPDGQEFVQEGRWEGQLLRGPKGENGFGYDPLFIPAEEIDGQGRSSAELSAEEKDALSHRGQALRGLVEKIAQVAAAS.

A substrate-binding site is contributed by 7–12 (SNNAKK). The Proton acceptor role is filled by Asp-72. Asp-72 is a binding site for Mg(2+). Residues Ser-73, 155–158 (FGYD), Lys-182, and 187–188 (HR) each bind substrate.

Belongs to the HAM1 NTPase family. In terms of assembly, homodimer. Mg(2+) is required as a cofactor.

The catalysed reaction is XTP + H2O = XMP + diphosphate + H(+). It catalyses the reaction dITP + H2O = dIMP + diphosphate + H(+). It carries out the reaction ITP + H2O = IMP + diphosphate + H(+). Pyrophosphatase that catalyzes the hydrolysis of nucleoside triphosphates to their monophosphate derivatives, with a high preference for the non-canonical purine nucleotides XTP (xanthosine triphosphate), dITP (deoxyinosine triphosphate) and ITP. Seems to function as a house-cleaning enzyme that removes non-canonical purine nucleotides from the nucleotide pool, thus preventing their incorporation into DNA/RNA and avoiding chromosomal lesions. The polypeptide is dITP/XTP pyrophosphatase (Corynebacterium glutamicum (strain ATCC 13032 / DSM 20300 / JCM 1318 / BCRC 11384 / CCUG 27702 / LMG 3730 / NBRC 12168 / NCIMB 10025 / NRRL B-2784 / 534)).